The primary structure comprises 717 residues: MEQTQTAEGTDLLIGDEKTNDLPFVQLFLEEIGCTQYLDSFIQCNLVTEEEIKYLDKDILIALGVNKIGDRLKILRKSKSFQRDKRIEQVNRLKNLMEKVSSLSTATLSMNSELIPEKHCVIFILNDGSAKKVNVNGCFNADSIKKRLIRRLPHELLATNSNGEVTKMVQDYDVFVLDYTKNVLHLLYDVELVTICHANDRVEKNRLIFVSKDQTPSDKAISTSKKLYLRTLSALSQVGPSSSNLLAQNKGISHNNAEGKLRIDNTEKDRIRQIFNQRPPSEFISTNLAGYFPHTDMKRLQKTMRESFRHSARLSIAQRRPLSAESNNIGDILLKHSNAVDMALLQGLDQTRLSSKLDTTKIPKLAHKRPEDNDAISNQLELLSVESGEEEDHDFFGEDSDIVSLPTKIATPKNWLKGACIGSGSFGSVYLGMNAHTGELMAVKQVEIKNNNIGVPTDNNKQANSDENNEQEEQQEKIEDVGAVSHPKTNQNIHRKMVDALQHEMNLLKELHHENIVTYYGASQEGGNLNIFLEYVPGGSVSSMLNNYGPFEESLITNFTRQILIGVAYLHKKNIIHRDIKGANILIDIKGCVKITDFGISKKLSPLNKKQNKRASLQGSVFWMSPEVVKQTATTAKADIWSTGCVVIEMFTGKHPFPDFSQMQAIFKIGTNTTPEIPSWATSEGKNFLRKAFELDYQYRPSALELLQHPWLDAHII.

The 65-residue stretch at 20–84 folds into the SAM domain; the sequence is NDLPFVQLFL…LRKSKSFQRD (65 aa). Ser-323 bears the Phosphoserine mark. The Protein kinase domain maps to 415–712; it reads WLKGACIGSG…ALELLQHPWL (298 aa). Residues 421-429 and Lys-444 each bind ATP; that span reads IGSGSFGSV. Residues 452 to 466 show a composition bias toward polar residues; sequence NIGVPTDNNKQANSD. Residues 452-481 are disordered; it reads NIGVPTDNNKQANSDENNEQEEQQEKIEDV. Position 465 is a phosphoserine (Ser-465). The active-site Proton acceptor is the Asp-579.

Belongs to the protein kinase superfamily. STE Ser/Thr protein kinase family. MAP kinase kinase kinase subfamily. Homodimer. Interacts (via SAM domain) with STE50 (via SAM domain). Interacts with PBS2 and SHO1.

The enzyme catalyses L-seryl-[protein] + ATP = O-phospho-L-seryl-[protein] + ADP + H(+). The catalysed reaction is L-threonyl-[protein] + ATP = O-phospho-L-threonyl-[protein] + ADP + H(+). Functionally, serine/threonine protein kinase required for cell-type-specific transcription and signal transduction in yeast. It is thought that it phosphorylates the STE7 protein kinase which itself, phosphorylates the FUS3 and or KSS1 kinases. This is Serine/threonine-protein kinase STE11 (STE11) from Saccharomyces cerevisiae (strain ATCC 204508 / S288c) (Baker's yeast).